The sequence spans 138 residues: Large ribosomal subunit protein uL16 (138 aa).

The protein belongs to the universal ribosomal protein uL16 family. Part of the 50S ribosomal subunit.

In terms of biological role, binds 23S rRNA and is also seen to make contacts with the A and possibly P site tRNAs. The chain is Large ribosomal subunit protein uL16 from Mycoplasmoides gallisepticum (strain R(low / passage 15 / clone 2)) (Mycoplasma gallisepticum).